The following is a 274-amino-acid chain: Imidazole glycerol phosphate synthase subunit HisF (274 aa).

Residues Asp-11 and Asp-134 contribute to the active site.

Belongs to the HisA/HisF family. As to quaternary structure, heterodimer of HisH and HisF.

Its subcellular location is the cytoplasm. It catalyses the reaction 5-[(5-phospho-1-deoxy-D-ribulos-1-ylimino)methylamino]-1-(5-phospho-beta-D-ribosyl)imidazole-4-carboxamide + L-glutamine = D-erythro-1-(imidazol-4-yl)glycerol 3-phosphate + 5-amino-1-(5-phospho-beta-D-ribosyl)imidazole-4-carboxamide + L-glutamate + H(+). It participates in amino-acid biosynthesis; L-histidine biosynthesis; L-histidine from 5-phospho-alpha-D-ribose 1-diphosphate: step 5/9. Its function is as follows. IGPS catalyzes the conversion of PRFAR and glutamine to IGP, AICAR and glutamate. The HisF subunit catalyzes the cyclization activity that produces IGP and AICAR from PRFAR using the ammonia provided by the HisH subunit. This chain is Imidazole glycerol phosphate synthase subunit HisF, found in Methanobrevibacter smithii (strain ATCC 35061 / DSM 861 / OCM 144 / PS).